The chain runs to 383 residues: Dual-specificity RNA methyltransferase RlmN (383 aa).

The active-site Proton acceptor is the glutamate 94. The Radical SAM core domain maps to 100–339; it reads DGDRATLCVS…VTVRRTRGDD (240 aa). Cysteine 107 and cysteine 344 are oxidised to a cystine. [4Fe-4S] cluster contacts are provided by cysteine 114, cysteine 118, and cysteine 121. Residues 168–169, serine 200, 222–224, and asparagine 301 each bind S-adenosyl-L-methionine; these read GE and SLH. Cysteine 344 acts as the S-methylcysteine intermediate in catalysis.

Belongs to the radical SAM superfamily. RlmN family. Requires [4Fe-4S] cluster as cofactor.

It localises to the cytoplasm. The catalysed reaction is adenosine(2503) in 23S rRNA + 2 reduced [2Fe-2S]-[ferredoxin] + 2 S-adenosyl-L-methionine = 2-methyladenosine(2503) in 23S rRNA + 5'-deoxyadenosine + L-methionine + 2 oxidized [2Fe-2S]-[ferredoxin] + S-adenosyl-L-homocysteine. It carries out the reaction adenosine(37) in tRNA + 2 reduced [2Fe-2S]-[ferredoxin] + 2 S-adenosyl-L-methionine = 2-methyladenosine(37) in tRNA + 5'-deoxyadenosine + L-methionine + 2 oxidized [2Fe-2S]-[ferredoxin] + S-adenosyl-L-homocysteine. In terms of biological role, specifically methylates position 2 of adenine 2503 in 23S rRNA and position 2 of adenine 37 in tRNAs. m2A2503 modification seems to play a crucial role in the proofreading step occurring at the peptidyl transferase center and thus would serve to optimize ribosomal fidelity. In Aliivibrio salmonicida (strain LFI1238) (Vibrio salmonicida (strain LFI1238)), this protein is Dual-specificity RNA methyltransferase RlmN.